A 980-amino-acid polypeptide reads, in one-letter code: Conserved oligomeric Golgi complex subunit 1 (980 aa).

Position 2 is an N-acetylalanine (Ala2). Ser7 bears the Phosphoserine mark. Lys598 is modified (N6-acetyllysine). Residues 923 to 934 (RATSRSVETQAQ) are compositionally biased toward polar residues. The segment at 923-950 (RATSRSVETQAQVGPPALSRVGDPTTHP) is disordered.

The protein belongs to the COG1 family. Component of the conserved oligomeric Golgi complex which is composed of eight different subunits and is required for normal Golgi morphology and localization.

It localises to the golgi apparatus membrane. Its function is as follows. Required for normal Golgi function. This Mus musculus (Mouse) protein is Conserved oligomeric Golgi complex subunit 1 (Cog1).